A 314-amino-acid chain; its full sequence is Oxaloacetate tautomerase FAHD2A, mitochondrial (314 aa).

The N-terminal 84 residues, M1–L84, are a transit peptide targeting the mitochondrion. Mg(2+)-binding residues include E159, E161, and D190.

The protein belongs to the FAH family. Mg(2+) serves as cofactor. Requires Mn(2+) as cofactor.

The protein resides in the mitochondrion. It carries out the reaction oxaloacetate = enol-oxaloacetate. Tautomerase that converts enol-oxaloacetate, a strong inhibitor of succinate dehydrogenase, to the physiological keto form of oxaloacetate. It is thereby required to maximize aerobic respiration efficiency by preventing succinate dehydrogenase inhibition. This Bos taurus (Bovine) protein is Oxaloacetate tautomerase FAHD2A, mitochondrial.